Consider the following 1159-residue polypeptide: ATP-dependent helicase/deoxyribonuclease subunit B (1159 aa).

Belongs to the helicase family. AddB/RexB type 2 subfamily. In terms of assembly, heterodimer of AddA and RexB. Mg(2+) serves as cofactor.

Its function is as follows. The heterodimer acts as both an ATP-dependent DNA helicase and an ATP-dependent, dual-direction single-stranded exonuclease. Recognizes the chi site generating a DNA molecule suitable for the initiation of homologous recombination. This subunit has 5' -&gt; 3' nuclease activity but not helicase activity. In Leuconostoc mesenteroides subsp. mesenteroides (strain ATCC 8293 / DSM 20343 / BCRC 11652 / CCM 1803 / JCM 6124 / NCDO 523 / NBRC 100496 / NCIMB 8023 / NCTC 12954 / NRRL B-1118 / 37Y), this protein is ATP-dependent helicase/deoxyribonuclease subunit B.